The primary structure comprises 350 residues: TATA box-binding protein-like 2 (350 aa).

Residues 82 to 150 (ENRDQTVTGN…QPSPETPNSN (69 aa)) form a disordered region. The segment covering 94-116 (ASEESCRTRDRQSQLQLPDEHGS) has biased composition (basic and acidic residues). Polar residues-rich tracts occupy residues 118–128 (LNLNSNSSPDP) and 139–150 (SNQPSPETPNSN).

This sequence belongs to the TBP family. In terms of assembly, interacts with TAF3. Expressed in myotubes and myofibers (at protein level). Expressed in a wide variety of tissues with highest levels in heart, lung, liver, uterus and placenta and especially the gonads. Expression is higher in the ovary than the testis, and within the ovary expression is localized to the oocytes.

Its subcellular location is the cytoplasm. The protein localises to the nucleus. Transcription factor required in complex with TAF3 for the differentiation of myoblasts into myocytes. The complex replaces TFIID at specific promoters at an early stage in the differentiation process. This is TATA box-binding protein-like 2 from Mus musculus (Mouse).